Consider the following 476-residue polypeptide: ATP synthase subunit beta, chloroplastic (476 aa).

Gly153–Thr160 is a binding site for ATP.

Belongs to the ATPase alpha/beta chains family. F-type ATPases have 2 components, CF(1) - the catalytic core - and CF(0) - the membrane proton channel. CF(1) has five subunits: alpha(3), beta(3), gamma(1), delta(1), epsilon(1). CF(0) has four main subunits: a(1), b(1), b'(1) and c(9-12).

Its subcellular location is the plastid. The protein localises to the chloroplast thylakoid membrane. It carries out the reaction ATP + H2O + 4 H(+)(in) = ADP + phosphate + 5 H(+)(out). Produces ATP from ADP in the presence of a proton gradient across the membrane. The catalytic sites are hosted primarily by the beta subunits. This chain is ATP synthase subunit beta, chloroplastic, found in Dicksonia antarctica (Australian tree fern).